The chain runs to 336 residues: Adenosine deaminase (336 aa).

Residues His15 and His17 each coordinate Zn(2+). Positions 17, 19, and 172 each coordinate substrate. His199 lines the Zn(2+) pocket. Catalysis depends on Glu202, which acts as the Proton donor. Asp279 is a Zn(2+) binding site.

The protein belongs to the metallo-dependent hydrolases superfamily. Adenosine and AMP deaminases family. Adenosine deaminase subfamily. Zn(2+) is required as a cofactor.

It catalyses the reaction adenosine + H2O + H(+) = inosine + NH4(+). It carries out the reaction 2'-deoxyadenosine + H2O + H(+) = 2'-deoxyinosine + NH4(+). Catalyzes the hydrolytic deamination of adenosine and 2-deoxyadenosine. This Streptococcus thermophilus (strain ATCC BAA-491 / LMD-9) protein is Adenosine deaminase.